Consider the following 448-residue polypeptide: UPF0053 protein sll0260 (448 aa).

The region spanning 2–203 is the CNNM transmembrane domain; the sequence is FSSSVELELF…AQAGMIDEAE (202 aa). Transmembrane regions (helical) follow at residues 11-31, 62-82, 106-126, and 142-162; these read FFIF…IAIV, FLSA…AVGG, LSIS…GELV, and VAPA…LLGV. CBS domains lie at 222-281 and 286-345; these read MTPR…GQKI and IVQP…NDDE.

Belongs to the UPF0053 family.

It localises to the cell membrane. This Synechocystis sp. (strain ATCC 27184 / PCC 6803 / Kazusa) protein is UPF0053 protein sll0260.